Consider the following 213-residue polypeptide: High frequency lysogenization protein HflD homolog (213 aa).

A coiled-coil region spans residues 79–126 (QGLNAELTRYTLSLMVLERKLSSAKGALDTLGNRINGLQRQLEHFDLQ).

Belongs to the HflD family.

It is found in the cytoplasm. Its subcellular location is the cell inner membrane. The chain is High frequency lysogenization protein HflD homolog from Shigella flexneri serotype 5b (strain 8401).